Consider the following 348-residue polypeptide: GTPase Obg 1 (348 aa).

In terms of domain architecture, Obg spans 1–159; the sequence is MSFVDEAKIH…HCVLLKLKIV (159 aa). One can recognise an OBG-type G domain in the interval 160 to 329; sequence SDVGIIGMPN…LHAQVKKAVV (170 aa). Residues 166 to 173, 191 to 195, 212 to 215, 279 to 282, and 310 to 312 contribute to the GTP site; these read GMPNAGKS, FTTLE, DIPG, NKCD, and GDE. The Mg(2+) site is built by Ser-173 and Thr-193.

Belongs to the TRAFAC class OBG-HflX-like GTPase superfamily. OBG GTPase family. In terms of assembly, monomer. Requires Mg(2+) as cofactor.

The protein localises to the cytoplasm. Its function is as follows. An essential GTPase which binds GTP, GDP and possibly (p)ppGpp with moderate affinity, with high nucleotide exchange rates and a fairly low GTP hydrolysis rate. Plays a role in control of the cell cycle, stress response, ribosome biogenesis and in those bacteria that undergo differentiation, in morphogenesis control. This is GTPase Obg 1 from Anaplasma marginale (strain Florida).